The primary structure comprises 293 residues: uncharacterized protein (293 aa).

The protein to M.jannaschii MJ1614 and MJ0008.

This is an uncharacterized protein from Methanocaldococcus jannaschii (strain ATCC 43067 / DSM 2661 / JAL-1 / JCM 10045 / NBRC 100440) (Methanococcus jannaschii).